The chain runs to 225 residues: MNSIKFPVLDRTTKNSVISTTLNDLSNWSRLSSLWPLLYGTSCCFIEFASLIGSRFDFDRYGLVPRSSPRQADLILTAGTVTMKMAPSLVRLYEQMPEPKYVIAMGACTITGGMFSTDSYSTVRGVDKLIPVDVYLPGCPPKPEAVIDAITKLRKKIAREIYKDRIIPQRGNRCFTTNHKFFFVRSTQTGNYDQELLYPPSSTSEISTETFFKYKSPVSSHELVN.

[4Fe-4S] cluster contacts are provided by cysteine 43, cysteine 44, cysteine 108, and cysteine 139.

The protein belongs to the complex I 20 kDa subunit family. NDH is composed of at least 16 different subunits, 5 of which are encoded in the nucleus. [4Fe-4S] cluster is required as a cofactor.

It localises to the plastid. The protein localises to the chloroplast thylakoid membrane. It catalyses the reaction a plastoquinone + NADH + (n+1) H(+)(in) = a plastoquinol + NAD(+) + n H(+)(out). The enzyme catalyses a plastoquinone + NADPH + (n+1) H(+)(in) = a plastoquinol + NADP(+) + n H(+)(out). Its function is as follows. NDH shuttles electrons from NAD(P)H:plastoquinone, via FMN and iron-sulfur (Fe-S) centers, to quinones in the photosynthetic chain and possibly in a chloroplast respiratory chain. The immediate electron acceptor for the enzyme in this species is believed to be plastoquinone. Couples the redox reaction to proton translocation, and thus conserves the redox energy in a proton gradient. The chain is NAD(P)H-quinone oxidoreductase subunit K, chloroplastic from Lobularia maritima (Sweet alyssum).